Here is a 228-residue protein sequence, read N- to C-terminus: Large ribosomal subunit protein uL3 (228 aa).

N5-methylglutamine is present on Gln-151.

Belongs to the universal ribosomal protein uL3 family. In terms of assembly, part of the 50S ribosomal subunit. Forms a cluster with proteins L14 and L19. Methylated by PrmB.

Functionally, one of the primary rRNA binding proteins, it binds directly near the 3'-end of the 23S rRNA, where it nucleates assembly of the 50S subunit. The protein is Large ribosomal subunit protein uL3 of Rhizobium meliloti (strain 1021) (Ensifer meliloti).